A 347-amino-acid chain; its full sequence is Fused nickel transport protein NikMN (347 aa).

Helical transmembrane passes span 6 to 26 (GYLS…FWYV), 40 to 60 (LPLV…NLPI), 73 to 93 (IAAV…ALLI), 96 to 116 (IFFG…MAVV), 140 to 160 (VIMA…LAAV), 185 to 205 (VAVP…EFIV), 236 to 256 (LWAG…AAGT), 273 to 293 (AAMA…GGFA), and 319 to 339 (VLSA…SAGL).

It belongs to the CbiM family. NikM subfamily. In terms of assembly, forms an energy-coupling factor (ECF) transporter complex composed of an ATP-binding protein (A component, NikO), a transmembrane protein (T component, NikQ) and a fused possible substrate-capture protein (S component, NikMN) of unknown stoichimetry.

The protein resides in the cell inner membrane. Functionally, part of the energy-coupling factor (ECF) transporter complex NikMNQO involved in nickel import. The complex confers nickel uptake upon expression in E.coli; can also transport cobalt with a very low affinity. This is Fused nickel transport protein NikMN (nikMN) from Rhodobacter capsulatus (strain ATCC BAA-309 / NBRC 16581 / SB1003).